We begin with the raw amino-acid sequence, 332 residues long: Eukaryotic translation initiation factor 3 subunit I (332 aa).

WD repeat units lie at residues 8 to 47 (GHERALTQVKYNGDGDIIFSVSKDHVDADSHNGERIGTYH), 48 to 87 (GHQGALWTVDVNPDSTLLATGGADNTLRLWEVQTGKLLHT), 144 to 182 (DESKATVAGFSYLAKYIISGHEDGSVTQWDGKTGELLSS), and 279 to 318 (GHFGPLNYVAVHPQGTGYCSGGEDGYVRVHHFDKPYFDFM).

It belongs to the eIF-3 subunit I family. In terms of assembly, component of the eukaryotic translation initiation factor 3 (eIF-3) complex.

Its subcellular location is the cytoplasm. Functionally, component of the eukaryotic translation initiation factor 3 (eIF-3) complex, which is involved in protein synthesis of a specialized repertoire of mRNAs and, together with other initiation factors, stimulates binding of mRNA and methionyl-tRNAi to the 40S ribosome. The eIF-3 complex specifically targets and initiates translation of a subset of mRNAs involved in cell proliferation. In Phaeosphaeria nodorum (strain SN15 / ATCC MYA-4574 / FGSC 10173) (Glume blotch fungus), this protein is Eukaryotic translation initiation factor 3 subunit I.